The following is a 149-amino-acid chain: UPF0178 protein VC0395_A0405/VC395_0897 (149 aa).

The protein belongs to the UPF0178 family.

The sequence is that of UPF0178 protein VC0395_A0405/VC395_0897 from Vibrio cholerae serotype O1 (strain ATCC 39541 / Classical Ogawa 395 / O395).